Reading from the N-terminus, the 256-residue chain is MPYLYRIAYDGTMFYGFTGHPNSLEPRLRLIFGEILGRGSRTDPGVSAVGNVVMTGRKMALGYVNSKMPKGAWAWGIAEVPEGFNPRRAKLRRYLYVAPHWGEDVDVMREAAKLLTGTHDYSSFIQLRGEKHTPTVTTVYDIDVTLRGDLIFIYFAGRGFRNKMIRKMAWALLAAGRGVLSVDDLADLLKKPRPGAVPSAPAEGLVLLDIVYDVKFEVDFSALRKAYVYFLSKSRHLSAHAAALRAAGEALAMWES.

Asp43 serves as the catalytic Nucleophile. Tyr94 provides a ligand contact to substrate.

This sequence belongs to the tRNA pseudouridine synthase TruA family.

The enzyme catalyses uridine(38/39/40) in tRNA = pseudouridine(38/39/40) in tRNA. Formation of pseudouridine at positions 38, 39 and 40 in the anticodon stem and loop of transfer RNAs. This is tRNA pseudouridine synthase A from Pyrobaculum aerophilum (strain ATCC 51768 / DSM 7523 / JCM 9630 / CIP 104966 / NBRC 100827 / IM2).